Here is a 327-residue protein sequence, read N- to C-terminus: GMP reductase (327 aa).

Cysteine 175 (thioimidate intermediate) is an active-site residue. An NADP(+)-binding site is contributed by 204-227 (IIADGGIRTHGDVAKSIRFGATMV).

It belongs to the IMPDH/GMPR family. GuaC type 2 subfamily.

It catalyses the reaction IMP + NH4(+) + NADP(+) = GMP + NADPH + 2 H(+). Functionally, catalyzes the irreversible NADPH-dependent deamination of GMP to IMP. It functions in the conversion of nucleobase, nucleoside and nucleotide derivatives of G to A nucleotides, and in maintaining the intracellular balance of A and G nucleotides. This Bacillus thuringiensis subsp. konkukian (strain 97-27) protein is GMP reductase.